Here is a 336-residue protein sequence, read N- to C-terminus: Tetraacyldisaccharide 4'-kinase (336 aa).

58–65 (AVGGSGKT) is an ATP binding site.

The protein belongs to the LpxK family.

It carries out the reaction a lipid A disaccharide + ATP = a lipid IVA + ADP + H(+). The protein operates within glycolipid biosynthesis; lipid IV(A) biosynthesis; lipid IV(A) from (3R)-3-hydroxytetradecanoyl-[acyl-carrier-protein] and UDP-N-acetyl-alpha-D-glucosamine: step 6/6. Functionally, transfers the gamma-phosphate of ATP to the 4'-position of a tetraacyldisaccharide 1-phosphate intermediate (termed DS-1-P) to form tetraacyldisaccharide 1,4'-bis-phosphate (lipid IVA). The sequence is that of Tetraacyldisaccharide 4'-kinase from Aromatoleum aromaticum (strain DSM 19018 / LMG 30748 / EbN1) (Azoarcus sp. (strain EbN1)).